We begin with the raw amino-acid sequence, 300 residues long: Spermatogenesis-associated serine-rich protein 1 (300 aa).

Residues 1–10 are compositionally biased toward polar residues; sequence MSPSMLTGNS. Disordered regions lie at residues 1-42 and 64-91; these read MSPS…MTEV and TPSG…LPRV. Basic and acidic residues predominate over residues 27-42; it reads QLEKVPEKRDSGMTEV. A compositionally biased stretch (low complexity) spans 64-85; it reads TPSGKSVSSSSSVETGPSVSEP. Residue Ser-113 is modified to Phosphoserine.

This chain is Spermatogenesis-associated serine-rich protein 1 (SPATS1), found in Homo sapiens (Human).